The sequence spans 351 residues: Auxin-responsive protein IAA27 (351 aa).

The tract at residues Met-1–Lys-37 is disordered. A compositionally biased stretch (low complexity) spans Ser-21–Asn-34. Positions Asn-233–Asn-327 constitute a PB1 domain.

This sequence belongs to the Aux/IAA family. Homodimers and heterodimers. In terms of tissue distribution, expressed in roots and seedlings.

Its subcellular location is the nucleus. Aux/IAA proteins are short-lived transcriptional factors that function as repressors of early auxin response genes at low auxin concentrations. This Oryza sativa subsp. japonica (Rice) protein is Auxin-responsive protein IAA27 (IAA27).